We begin with the raw amino-acid sequence, 355 residues long: Epoxyqueuosine reductase (355 aa).

Residue aspartate 143 is the Proton donor of the active site. In terms of domain architecture, 4Fe-4S ferredoxin-type spans 185–217; sequence LPLPIDTPATAHCGTCTRCIDICPTQAIIAPHR. 8 residues coordinate [4Fe-4S] cluster: cysteine 197, cysteine 200, cysteine 203, cysteine 207, cysteine 223, cysteine 250, cysteine 253, and cysteine 257.

Belongs to the QueG family. As to quaternary structure, monomer. Requires cob(II)alamin as cofactor. The cofactor is [4Fe-4S] cluster.

The protein resides in the cytoplasm. It catalyses the reaction epoxyqueuosine(34) in tRNA + AH2 = queuosine(34) in tRNA + A + H2O. The protein operates within tRNA modification; tRNA-queuosine biosynthesis. Functionally, catalyzes the conversion of epoxyqueuosine (oQ) to queuosine (Q), which is a hypermodified base found in the wobble positions of tRNA(Asp), tRNA(Asn), tRNA(His) and tRNA(Tyr). This Xanthomonas campestris pv. campestris (strain ATCC 33913 / DSM 3586 / NCPPB 528 / LMG 568 / P 25) protein is Epoxyqueuosine reductase.